Reading from the N-terminus, the 344-residue chain is MTERSDRDVSPALTVGEGDIDVSLRPRSLREFIGQPRVREQLQLVIEGAKNRGGTPDHILLSGPPGLGKTSLAMIIAAELGSSLRVTSGPALERAGDLAAMLSNLVEHDVLFIDEIHRIARPAEEMLYLAMEDFRVDVVVGKGPGATSIPLEVAPFTLVGATTRSGALTGPLRDRFGFTAHMDFYEPAELERVLARSAGILGIELGADAGAEIARRSRGTPRIANRLLRRVRDFAEVRADGVITRDVAKAALEVYDVDELGLDRLDRAVLSALTRSFGGGPVGVSTLAVAVGEEAATVEEVCEPFLVRAGMVARTPRGRVATALAWTHLGMTPPVGASQPGLFE.

The segment at 1–185 is large ATPase domain (RuvB-L); it reads MTERSDRDVS…FGFTAHMDFY (185 aa). Residues L24, R25, G66, K69, T70, S71, 132 to 134, R175, Y185, and R222 each bind ATP; that span reads EDF. A Mg(2+)-binding site is contributed by T70. The small ATPAse domain (RuvB-S) stretch occupies residues 186 to 256; the sequence is EPAELERVLA…VAKAALEVYD (71 aa). The interval 259–344 is head domain (RuvB-H); the sequence is ELGLDRLDRA…VGASQPGLFE (86 aa). R314 and R319 together coordinate DNA.

The protein belongs to the RuvB family. Homohexamer. Forms an RuvA(8)-RuvB(12)-Holliday junction (HJ) complex. HJ DNA is sandwiched between 2 RuvA tetramers; dsDNA enters through RuvA and exits via RuvB. An RuvB hexamer assembles on each DNA strand where it exits the tetramer. Each RuvB hexamer is contacted by two RuvA subunits (via domain III) on 2 adjacent RuvB subunits; this complex drives branch migration. In the full resolvosome a probable DNA-RuvA(4)-RuvB(12)-RuvC(2) complex forms which resolves the HJ.

The protein resides in the cytoplasm. It carries out the reaction ATP + H2O = ADP + phosphate + H(+). In terms of biological role, the RuvA-RuvB-RuvC complex processes Holliday junction (HJ) DNA during genetic recombination and DNA repair, while the RuvA-RuvB complex plays an important role in the rescue of blocked DNA replication forks via replication fork reversal (RFR). RuvA specifically binds to HJ cruciform DNA, conferring on it an open structure. The RuvB hexamer acts as an ATP-dependent pump, pulling dsDNA into and through the RuvAB complex. RuvB forms 2 homohexamers on either side of HJ DNA bound by 1 or 2 RuvA tetramers; 4 subunits per hexamer contact DNA at a time. Coordinated motions by a converter formed by DNA-disengaged RuvB subunits stimulates ATP hydrolysis and nucleotide exchange. Immobilization of the converter enables RuvB to convert the ATP-contained energy into a lever motion, pulling 2 nucleotides of DNA out of the RuvA tetramer per ATP hydrolyzed, thus driving DNA branch migration. The RuvB motors rotate together with the DNA substrate, which together with the progressing nucleotide cycle form the mechanistic basis for DNA recombination by continuous HJ branch migration. Branch migration allows RuvC to scan DNA until it finds its consensus sequence, where it cleaves and resolves cruciform DNA. This Mycobacterium tuberculosis (strain ATCC 25177 / H37Ra) protein is Holliday junction branch migration complex subunit RuvB.